The sequence spans 159 residues: Ethylene-responsive transcription factor ERF069 (159 aa).

2 disordered regions span residues 1–36 (MKRI…KKLV) and 128–159 (DAPT…EEVV). Positions 74–134 (KFRGVRQRPW…IGPDAPTNFG (61 aa)) form a DNA-binding region, AP2/ERF. Basic and acidic residues predominate over residues 136-148 (PDVDSAVVKKQDS).

This sequence belongs to the AP2/ERF transcription factor family. ERF subfamily.

It localises to the nucleus. Functionally, probably acts as a transcriptional activator. Binds to the GCC-box pathogenesis-related promoter element. May be involved in the regulation of gene expression by stress factors and by components of stress signal transduction pathways. This chain is Ethylene-responsive transcription factor ERF069 (ERF069), found in Arabidopsis thaliana (Mouse-ear cress).